Here is a 457-residue protein sequence, read N- to C-terminus: tRNA-2-methylthio-N(6)-dimethylallyladenosine synthase (457 aa).

An MTTase N-terminal domain is found at K8–A123. Positions 17, 54, 86, 160, 164, and 167 each coordinate [4Fe-4S] cluster. The region spanning R146–R379 is the Radical SAM core domain. Residues Q382–L449 enclose the TRAM domain.

The protein belongs to the methylthiotransferase family. MiaB subfamily. In terms of assembly, monomer. [4Fe-4S] cluster serves as cofactor.

It is found in the cytoplasm. It catalyses the reaction N(6)-dimethylallyladenosine(37) in tRNA + (sulfur carrier)-SH + AH2 + 2 S-adenosyl-L-methionine = 2-methylsulfanyl-N(6)-dimethylallyladenosine(37) in tRNA + (sulfur carrier)-H + 5'-deoxyadenosine + L-methionine + A + S-adenosyl-L-homocysteine + 2 H(+). Functionally, catalyzes the methylthiolation of N6-(dimethylallyl)adenosine (i(6)A), leading to the formation of 2-methylthio-N6-(dimethylallyl)adenosine (ms(2)i(6)A) at position 37 in tRNAs that read codons beginning with uridine. This chain is tRNA-2-methylthio-N(6)-dimethylallyladenosine synthase, found in Methylibium petroleiphilum (strain ATCC BAA-1232 / LMG 22953 / PM1).